Reading from the N-terminus, the 940-residue chain is Antiviral innate immune response receptor RIG-I (940 aa).

CARD domains are found at residues methionine 1 to glutamate 87 and tryptophan 92 to lysine 172. Residues lysine 48, lysine 96, lysine 154, lysine 164, lysine 172, and lysine 190 each participate in a glycyl lysine isopeptide (Lys-Gly) (interchain with G-Cter in ubiquitin) cross-link. The interaction with ZC3HAV1 stretch occupies residues glutamate 219–glycine 928. The 180-residue stretch at alanine 249 to leucine 428 folds into the Helicase ATP-binding domain. Position 262 to 269 (alanine 262 to threonine 269) interacts with ATP. The DECH box motif lies at aspartate 370–histidine 373. The 167-residue stretch at lysine 613–phenylalanine 779 folds into the Helicase C-terminal domain. Residues glycine 738–glycine 928 are mediates interaction with RNF135. Threonine 773 bears the Phosphothreonine; by CK2 mark. The 134-residue stretch at aspartate 795 to glycine 928 folds into the RLR CTR domain. Cysteine 813 provides a ligand contact to Zn(2+). Residue lysine 815 forms a Glycyl lysine isopeptide (Lys-Gly) (interchain with G-Cter in ubiquitin) linkage. Cysteine 816 is a Zn(2+) binding site. An N6-acetyllysine modification is found at lysine 861. Residues cysteine 867 and cysteine 872 each coordinate Zn(2+). N6-acetyllysine is present on lysine 912.

It belongs to the helicase family. RLR subfamily. In terms of assembly, monomer; maintained as a monomer in an autoinhibited state. Upon binding of viral RNAs and conformational shift, homooligomerizes and forms filaments on these molecules. Interacts (via tandem CARD domain) with MAVS/IPS1 promoting its filamentation. Interacts with DHX58/LGP2, IKBKE, TBK1 and STING1. Interacts (via CARD domain) with TRIM25 (via SPRY domain). Interacts (double-stranded RNA-bound oligomeric form) with RNF135 (homodimer); involved in RNA length-dependent activation of the RIG-I signaling pathway. Interacts with CYLD. Interacts with NLRC5; blocks the interaction of MAVS/IPS1 to RIGI. Interacts with SRC. Interacts with DDX60. Interacts with ZC3HAV1 (via zinc-fingers) in an RNA-dependent manner. Interacts (via tandem CARD domain) with SEC14L1; the interaction is direct and impairs the interaction of RIGI with MAVS/IPS1. Interacts with VCP/p97; interaction is direct and allows the recruitment of RNF125 and subsequent ubiquitination and degradation. Interacts with NOP53; may regulate RIGI through USP15-mediated 'Lys-63'-linked deubiquitination. Interacts with SIGLEC10, CBL and PTPN11; within a negative feedback loop leading to RIGI degradation. Interacts with LRRC25. Interacts with ZCCHC3; leading to activation of RIGI. Interacts with RNF123. Interacts with UBE2D3 and UBE2N; E2 ubiquitin ligases involved in RNF135-mediated ubiquitination of RIGI and activation of the RIG-I signaling pathway. Interacts with IFIT3. Interacts with DDX3X. Interacts with RTN3. Interacts with ARL16; this interaction is GTP-dependent and induced upon viral infection; this interaction suppresses the RNA sensing activity of RIGI. Interacts with DHX16; this interaction enhances RIGI-mediated antiviral response. Interacts with IRGM; promoting RIGI degradation. Interacts with IFI6; this interaction inhibits RIGI activation. Interacts with ECSIT; this interaction bridges RIGI to the MAVS complex at the mitochondrion. Interacts with YWHAE; this interaction drives RIGI at the mitochondrion. Phosphorylated in resting cells and dephosphorylated in RNA virus-infected cells. Phosphorylation at Thr-773 results in inhibition of its activity while dephosphorylation at these sites results in its activation. In terms of processing, ISGylated. Conjugated to ubiquitin-like protein ISG15 upon IFN-beta stimulation. ISGylation negatively regulates its function in antiviral signaling response. Post-translationally, sumoylated, probably by MUL1; inhibiting its polyubiquitination. Acetylated in response to RNA virus infection. Deacetylated by HDAC6 in the presence of viral mRNAs which is required for detection of viral RNA by RIGI. In terms of processing, ubiquitinated. 'Lys-63' ubiquitination by RNF135, which occurs after RNA-binding and homodimerization, releases the autoinhibition of the CARD domains by the RLR CTR domain, an essential step in the activation of the RIG-I signaling pathway. Also ubiquitinated by TRIM4. Also undergoes 'Lys-48' ubiquitination by RNF125 that leads to proteasomal degradation. 'Lys-48' ubiquitination follows viral infection and is enhanced by 'Lys-63'-linked ubiquitination of the CARD domains that promotes interaction with VCP/p97 and subsequent recruitment of RNF125. Within a negative feedback loop involving SIGLEC10 and PTPN11, 'Lys-48' ubiquitination at Lys-815 by CBL also elicits the proteasomal degradation of RIGI. Deubiquitinated by CYLD, a protease that selectively cleaves 'Lys-63'-linked ubiquitin chains. Also probably deubiquitinated by USP17L2/USP17 that cleaves 'Lys-48'- and 'Lys-63'-linked ubiquitin chains and positively regulates the receptor. Ubiquitinated by TRIM40 via 'Lys-48'-linked ubiquitination; leading to proteasomal degradation. Deubiquitinated by USP27X that cleaves 'Lys-63'-linked ubiquitin chains and inhibits the innate immune receptor activity. Deubiquitinated by USP3 that also cleaves 'Lys-63'-linked ubiquitin chains and inhibits the innate immune receptor activity. Post-translationally, degraded via selective autophagy following interaction with IRGM. IRGM promotes RIGI recruitment to autophagosome membranes, promoting its SQSTM1/p62-dependent autophagic degradation. In terms of tissue distribution, ubiquitously expressed, with highest levels in spleen, liver, intestine and heart. Up-regulated in tracheobronchial lymph node and tonsils during porcine reproductive and respiratory syndrome virus (PRRSV) infection.

The protein resides in the cytoplasm. It is found in the cell projection. Its subcellular location is the ruffle membrane. The protein localises to the cytoskeleton. It localises to the cell junction. The protein resides in the tight junction. It carries out the reaction ATP + H2O = ADP + phosphate + H(+). Functionally, innate immune receptor that senses cytoplasmic viral nucleic acids and activates a downstream signaling cascade leading to the production of type I interferons and pro-inflammatory cytokines. Forms a ribonucleoprotein complex with viral RNAs on which it homooligomerizes to form filaments. The homooligomerization allows the recruitment of RNF135 an E3 ubiquitin-protein ligase that activates and amplifies the RIG-I-mediated antiviral signaling in an RNA length-dependent manner through ubiquitination-dependent and -independent mechanisms. Upon activation, associates with mitochondria antiviral signaling protein (MAVS/IPS1) that activates the IKK-related kinases TBK1 and IKBKE which in turn phosphorylate the interferon regulatory factors IRF3 and IRF7, activating transcription of antiviral immunological genes including the IFN-alpha and IFN-beta interferons. Ligands include: 5'-triphosphorylated ssRNA and dsRNA and short dsRNA (&lt;1 kb in length). In addition to the 5'-triphosphate moiety, blunt-end base pairing at the 5'-end of the RNA is very essential. Overhangs at the non-triphosphorylated end of the dsRNA RNA have no major impact on its activity. A 3'overhang at the 5'triphosphate end decreases and any 5'overhang at the 5' triphosphate end abolishes its activity. Detects both positive and negative strand RNA viruses including members of the families Paramyxoviridae, Rhabdoviridae: vesicular stomatitis virus (VSV) Orthomyxoviridae: influenza A and B virus, Flaviviridae: Japanese encephalitis virus (JEV). It also detects rotavirus and reovirus. Also involved in antiviral signaling in response to viruses containing a dsDNA genome. Detects dsRNA produced from non-self dsDNA by RNA polymerase III. May play important roles in granulocyte production and differentiation, bacterial phagocytosis and in the regulation of cell migration. In Sus scrofa (Pig), this protein is Antiviral innate immune response receptor RIG-I.